Reading from the N-terminus, the 96-residue chain is Probable quinol oxidase subunit 4 (96 aa).

The next 3 membrane-spanning stretches (helical) occupy residues 8–28, 36–56, and 68–88; these read TVGF…TLYT, VTII…MFMH, and FKVI…YWVM.

Belongs to the cytochrome c oxidase bacterial subunit 4 family.

It is found in the cell membrane. It carries out the reaction 2 a quinol + O2 = 2 a quinone + 2 H2O. Its function is as follows. Catalyzes quinol oxidation with the concomitant reduction of oxygen to water. The chain is Probable quinol oxidase subunit 4 (qoxD) from Staphylococcus epidermidis (strain ATCC 35984 / DSM 28319 / BCRC 17069 / CCUG 31568 / BM 3577 / RP62A).